The primary structure comprises 193 residues: ATP synthase subunit b 1 (193 aa).

The disordered stretch occupies residues 9 to 28 (QEADHTAGETHTETGVAEGG). Residues 10 to 20 (EADHTAGETHT) show a composition bias toward basic and acidic residues. The helical transmembrane segment at 40–59 (TYPSQLLWLAITFGLFYLFL) threads the bilayer.

The protein belongs to the ATPase B chain family. F-type ATPases have 2 components, F(1) - the catalytic core - and F(0) - the membrane proton channel. F(1) has five subunits: alpha(3), beta(3), gamma(1), delta(1), epsilon(1). F(0) has three main subunits: a(1), b(2) and c(10-14). The alpha and beta chains form an alternating ring which encloses part of the gamma chain. F(1) is attached to F(0) by a central stalk formed by the gamma and epsilon chains, while a peripheral stalk is formed by the delta and b chains.

The protein resides in the cell inner membrane. F(1)F(0) ATP synthase produces ATP from ADP in the presence of a proton or sodium gradient. F-type ATPases consist of two structural domains, F(1) containing the extramembraneous catalytic core and F(0) containing the membrane proton channel, linked together by a central stalk and a peripheral stalk. During catalysis, ATP synthesis in the catalytic domain of F(1) is coupled via a rotary mechanism of the central stalk subunits to proton translocation. Its function is as follows. Component of the F(0) channel, it forms part of the peripheral stalk, linking F(1) to F(0). The sequence is that of ATP synthase subunit b 1 from Chelativorans sp. (strain BNC1).